The primary structure comprises 371 residues: tRNA-specific 2-thiouridylase MnmA (371 aa).

ATP is bound by residues 8–15 and M34; that span reads GMSGGVDS. The interval 94-96 is interaction with target base in tRNA; it reads NPD. The active-site Nucleophile is C99. Residues C99 and C195 are joined by a disulfide bond. G123 contacts ATP. The interval 145-147 is interaction with tRNA; it reads KDQ. Residue C195 is the Cysteine persulfide intermediate of the active site. The interaction with tRNA stretch occupies residues 309–310; it reads RY.

This sequence belongs to the MnmA/TRMU family.

The protein resides in the cytoplasm. The catalysed reaction is S-sulfanyl-L-cysteinyl-[protein] + uridine(34) in tRNA + AH2 + ATP = 2-thiouridine(34) in tRNA + L-cysteinyl-[protein] + A + AMP + diphosphate + H(+). Functionally, catalyzes the 2-thiolation of uridine at the wobble position (U34) of tRNA, leading to the formation of s(2)U34. This is tRNA-specific 2-thiouridylase MnmA from Methylococcus capsulatus (strain ATCC 33009 / NCIMB 11132 / Bath).